Consider the following 287-residue polypeptide: Large ribosomal subunit protein uL2 (287 aa).

A disordered region spans residues 221–287 (RGSVMNPCDH…SKRSRGGRDS (67 aa)). The segment covering 258 to 287 (KTRKRNKPSNRFVLRKRRRVSKRSRGGRDS) has biased composition (basic residues).

It belongs to the universal ribosomal protein uL2 family. In terms of assembly, part of the 50S ribosomal subunit. Forms a bridge to the 30S subunit in the 70S ribosome.

Functionally, one of the primary rRNA binding proteins. Required for association of the 30S and 50S subunits to form the 70S ribosome, for tRNA binding and peptide bond formation. It has been suggested to have peptidyltransferase activity; this is somewhat controversial. Makes several contacts with the 16S rRNA in the 70S ribosome. The polypeptide is Large ribosomal subunit protein uL2 (Prochlorococcus marinus (strain MIT 9211)).